The chain runs to 125 residues: Large ribosomal subunit protein eL8 (125 aa).

This sequence belongs to the eukaryotic ribosomal protein eL8 family. Part of the 50S ribosomal subunit. Probably part of the RNase P complex.

It is found in the cytoplasm. Multifunctional RNA-binding protein that recognizes the K-turn motif in ribosomal RNA, the RNA component of RNase P, box H/ACA, box C/D and box C'/D' sRNAs. This Nanoarchaeum equitans (strain Kin4-M) protein is Large ribosomal subunit protein eL8.